The sequence spans 92 residues: Putative protein IntG (92 aa).

This sequence belongs to the 'phage' integrase family.

The chain is Putative protein IntG (intG) from Escherichia coli (strain K12).